The sequence spans 99 residues: MMNMQNMMKQAQKLQKQMEQKQADLAAMTFVGKSAQDLVTATFTGDKKMVSIDFKEAVVDPDDMETLSDMTTQAINDALAQIDEATKKTMGAFAGKLPF.

The protein belongs to the YbaB/EbfC family. Homodimer.

It is found in the cytoplasm. It localises to the nucleoid. Functionally, binds to DNA and alters its conformation. May be involved in regulation of gene expression, nucleoid organization and DNA protection. The sequence is that of Nucleoid-associated protein SUB1611 from Streptococcus uberis (strain ATCC BAA-854 / 0140J).